The chain runs to 472 residues: Glycerol-3-phosphate acyltransferase, chloroplastic (472 aa).

A chloroplast-targeting transit peptide spans 1-102 (MLVLSSSAPP…EIPVKKEDDN (102 aa)). An HXXXXD motif motif is present at residues 241-246 (HQSEAD).

It belongs to the GPAT/DAPAT family.

The protein localises to the plastid. It is found in the chloroplast stroma. The enzyme catalyses sn-glycerol 3-phosphate + an acyl-CoA = a 1-acyl-sn-glycero-3-phosphate + CoA. It participates in phospholipid metabolism; CDP-diacylglycerol biosynthesis; CDP-diacylglycerol from sn-glycerol 3-phosphate: step 1/3. Esterifies acyl-group from acyl-ACP to the sn-1 position of glycerol-3-phosphate. The enzyme from chilling-resistant plants discriminates against non-fluid palmitic acid and selects oleic acid whereas the enzyme from sensitive plants accepts both fatty acids. This is an oleate-selective acyltransferase. The protein is Glycerol-3-phosphate acyltransferase, chloroplastic (GAT) of Spinacia oleracea (Spinach).